Consider the following 248-residue polypeptide: Putative imidazole glycerol phosphate synthase subunit hisF2 (248 aa).

Asp-129 is a catalytic residue.

Belongs to the HisA/HisF family. In terms of assembly, heterodimer of HisH and HisF.

The protein localises to the cytoplasm. The enzyme catalyses 5-[(5-phospho-1-deoxy-D-ribulos-1-ylimino)methylamino]-1-(5-phospho-beta-D-ribosyl)imidazole-4-carboxamide + L-glutamine = D-erythro-1-(imidazol-4-yl)glycerol 3-phosphate + 5-amino-1-(5-phospho-beta-D-ribosyl)imidazole-4-carboxamide + L-glutamate + H(+). Its pathway is amino-acid biosynthesis; L-histidine biosynthesis; L-histidine from 5-phospho-alpha-D-ribose 1-diphosphate: step 5/9. Its function is as follows. IGPS catalyzes the conversion of PRFAR and glutamine to IGP, AICAR and glutamate. The HisF subunit catalyzes the cyclization activity that produces IGP and AICAR from PRFAR using the ammonia provided by the HisH subunit. The sequence is that of Putative imidazole glycerol phosphate synthase subunit hisF2 (hisF2) from Campylobacter jejuni subsp. jejuni serotype O:2 (strain ATCC 700819 / NCTC 11168).